The chain runs to 91 residues: Probable Fe(2+)-trafficking protein (91 aa).

The protein belongs to the Fe(2+)-trafficking protein family.

Its function is as follows. Could be a mediator in iron transactions between iron acquisition and iron-requiring processes, such as synthesis and/or repair of Fe-S clusters in biosynthetic enzymes. The chain is Probable Fe(2+)-trafficking protein from Xanthomonas euvesicatoria pv. vesicatoria (strain 85-10) (Xanthomonas campestris pv. vesicatoria).